The chain runs to 618 residues: UvrABC system protein C (618 aa).

Positions 19-97 (SEPGIYRMLD…IKALRPKYNV (79 aa)) constitute a GIY-YIG domain. In terms of domain architecture, UVR spans 208 to 243 (QIILDALAERMKQAVNQLNFEEAAVLRDQIKNLRLI).

It belongs to the UvrC family. Interacts with UvrB in an incision complex.

It localises to the cytoplasm. Its function is as follows. The UvrABC repair system catalyzes the recognition and processing of DNA lesions. UvrC both incises the 5' and 3' sides of the lesion. The N-terminal half is responsible for the 3' incision and the C-terminal half is responsible for the 5' incision. In Legionella pneumophila (strain Paris), this protein is UvrABC system protein C.